Reading from the N-terminus, the 217-residue chain is 3,4-dihydroxy-2-butanone 4-phosphate synthase (217 aa).

D-ribulose 5-phosphate contacts are provided by residues 37–38 (RE), Asp-42, 150–154 (RGGHT), and Glu-174. Glu-38 contacts Mg(2+). His-153 is a binding site for Mg(2+).

The protein belongs to the DHBP synthase family. Homodimer. Mg(2+) is required as a cofactor. Mn(2+) serves as cofactor.

It carries out the reaction D-ribulose 5-phosphate = (2S)-2-hydroxy-3-oxobutyl phosphate + formate + H(+). It functions in the pathway cofactor biosynthesis; riboflavin biosynthesis; 2-hydroxy-3-oxobutyl phosphate from D-ribulose 5-phosphate: step 1/1. Its function is as follows. Catalyzes the conversion of D-ribulose 5-phosphate to formate and 3,4-dihydroxy-2-butanone 4-phosphate. This chain is 3,4-dihydroxy-2-butanone 4-phosphate synthase, found in Salmonella arizonae (strain ATCC BAA-731 / CDC346-86 / RSK2980).